The sequence spans 378 residues: Succinate--CoA ligase [GDP-forming] subunit beta (378 aa).

An ATP-grasp domain is found at 9 to 235 (KEILARYGVP…VEAEHPLEVE (227 aa)). GTP is bound by residues lysine 45, 52-54 (GRG), valine 94, and glutamate 99. 2 residues coordinate Mg(2+): asparagine 190 and aspartate 204. Substrate-binding positions include asparagine 255 and 312–314 (GIT).

This sequence belongs to the succinate/malate CoA ligase beta subunit family. In terms of assembly, heterotetramer of two alpha and two beta subunits. Mg(2+) is required as a cofactor.

The enzyme catalyses GTP + succinate + CoA = succinyl-CoA + GDP + phosphate. It carries out the reaction succinate + ATP + CoA = succinyl-CoA + ADP + phosphate. It participates in carbohydrate metabolism; tricarboxylic acid cycle; succinate from succinyl-CoA (ligase route): step 1/1. In terms of biological role, succinyl-CoA synthetase functions in the citric acid cycle (TCA), coupling the hydrolysis of succinyl-CoA to the synthesis of either ATP or GTP and thus represents the only step of substrate-level phosphorylation in the TCA. The beta subunit provides nucleotide specificity of the enzyme and binds the substrate succinate, while the binding sites for coenzyme A and phosphate are found in the alpha subunit. Can use either ATP or GTP, but prefers GTP. This Thermus thermophilus protein is Succinate--CoA ligase [GDP-forming] subunit beta.